Consider the following 496-residue polypeptide: Lysine--tRNA ligase (496 aa).

Residues E409 and E416 each contribute to the Mg(2+) site.

This sequence belongs to the class-II aminoacyl-tRNA synthetase family. Homodimer. It depends on Mg(2+) as a cofactor.

Its subcellular location is the cytoplasm. It catalyses the reaction tRNA(Lys) + L-lysine + ATP = L-lysyl-tRNA(Lys) + AMP + diphosphate. The protein is Lysine--tRNA ligase of Streptococcus thermophilus (strain ATCC BAA-491 / LMD-9).